The chain runs to 302 residues: tRNA-cytidine(32) 2-sulfurtransferase (302 aa).

Residues 44–49 (SGGKDS) carry the PP-loop motif motif. Residues cysteine 119, cysteine 122, and cysteine 210 each coordinate [4Fe-4S] cluster.

Belongs to the TtcA family. In terms of assembly, homodimer. It depends on Mg(2+) as a cofactor. Requires [4Fe-4S] cluster as cofactor.

It localises to the cytoplasm. It carries out the reaction cytidine(32) in tRNA + S-sulfanyl-L-cysteinyl-[cysteine desulfurase] + AH2 + ATP = 2-thiocytidine(32) in tRNA + L-cysteinyl-[cysteine desulfurase] + A + AMP + diphosphate + H(+). It functions in the pathway tRNA modification. Catalyzes the ATP-dependent 2-thiolation of cytidine in position 32 of tRNA, to form 2-thiocytidine (s(2)C32). The sulfur atoms are provided by the cysteine/cysteine desulfurase (IscS) system. This chain is tRNA-cytidine(32) 2-sulfurtransferase, found in Teredinibacter turnerae (strain ATCC 39867 / T7901).